Consider the following 152-residue polypeptide: Ribosome maturation factor RimP (152 aa).

It belongs to the RimP family.

The protein localises to the cytoplasm. Functionally, required for maturation of 30S ribosomal subunits. This is Ribosome maturation factor RimP from Stutzerimonas stutzeri (strain A1501) (Pseudomonas stutzeri).